The chain runs to 921 residues: Isoleucine--tRNA ligase (921 aa).

Positions 57–67 match the 'HIGH' region motif; the sequence is PYANGDIHMGH. Position 552 (glutamate 552) interacts with L-isoleucyl-5'-AMP. The 'KMSKS' region signature appears at 593 to 597; the sequence is KMSKS. Lysine 596 is an ATP binding site. Zn(2+)-binding residues include cysteine 887, cysteine 890, cysteine 907, and cysteine 910.

Belongs to the class-I aminoacyl-tRNA synthetase family. IleS type 1 subfamily. In terms of assembly, monomer. Zn(2+) is required as a cofactor.

It is found in the cytoplasm. It catalyses the reaction tRNA(Ile) + L-isoleucine + ATP = L-isoleucyl-tRNA(Ile) + AMP + diphosphate. Functionally, catalyzes the attachment of isoleucine to tRNA(Ile). As IleRS can inadvertently accommodate and process structurally similar amino acids such as valine, to avoid such errors it has two additional distinct tRNA(Ile)-dependent editing activities. One activity is designated as 'pretransfer' editing and involves the hydrolysis of activated Val-AMP. The other activity is designated 'posttransfer' editing and involves deacylation of mischarged Val-tRNA(Ile). The sequence is that of Isoleucine--tRNA ligase from Halalkalibacterium halodurans (strain ATCC BAA-125 / DSM 18197 / FERM 7344 / JCM 9153 / C-125) (Bacillus halodurans).